The chain runs to 372 residues: Enolase (372 aa).

Residues His95 and Glu104 each coordinate substrate. The Proton donor role is filled by Glu147. Mg(2+) is bound by residues Asp182, Glu232, and Asp257. The substrate site is built by Glu232 and Asp257. Lys282 (proton acceptor) is an active-site residue. Residues 309–312 and Lys333 contribute to the substrate site; that span reads SHRS.

Belongs to the enolase family. As to quaternary structure, homodimer. It depends on Mg(2+) as a cofactor.

It localises to the cytoplasm. The catalysed reaction is (2R)-2-phosphoglycerate = phosphoenolpyruvate + H2O. The protein operates within carbohydrate degradation; glycolysis; pyruvate from D-glyceraldehyde 3-phosphate: step 4/5. The chain is Enolase (ENO) from Chlamydomonas reinhardtii (Chlamydomonas smithii).